A 118-amino-acid chain; its full sequence is V-type proton ATPase subunit G 1 (118 aa).

Alanine 2 is subject to N-acetylalanine.

It belongs to the V-ATPase G subunit family. As to quaternary structure, V-ATPase is a heteromultimeric enzyme made up of two complexes: the ATP-hydrolytic V1 complex and the proton translocation V0 complex. The V1 complex consists of three catalytic AB heterodimers that form a heterohexamer, three peripheral stalks each consisting of EG heterodimers, one central rotor including subunits D and F, and the regulatory subunits C and H. The proton translocation complex V0 consists of the proton transport subunit a, a ring of proteolipid subunits c9c'', rotary subunit d, subunits e and f, and the accessory subunits ATP6AP1/Ac45 and ATP6AP2/PRR. In terms of tissue distribution, kidney; localizes to early distal nephron, encompassing thick ascending limbs and distal convoluted tubules (at protein level). Ubiquitous.

It localises to the apical cell membrane. In terms of biological role, subunit of the V1 complex of vacuolar(H+)-ATPase (V-ATPase), a multisubunit enzyme composed of a peripheral complex (V1) that hydrolyzes ATP and a membrane integral complex (V0) that translocates protons. V-ATPase is responsible for acidifying and maintaining the pH of intracellular compartments and in some cell types, is targeted to the plasma membrane, where it is responsible for acidifying the extracellular environment. In aerobic conditions, involved in intracellular iron homeostasis, thus triggering the activity of Fe(2+) prolyl hydroxylase (PHD) enzymes, and leading to HIF1A hydroxylation and subsequent proteasomal degradation. In Mus musculus (Mouse), this protein is V-type proton ATPase subunit G 1 (Atp6v1g1).